Here is a 297-residue protein sequence, read N- to C-terminus: Putative F-box protein At2g19630 (297 aa).

In terms of domain architecture, F-box spans 11–60; it reads TKNSLQIPIDLIIEIFLRLSVNSIARCRCVSKQWASTLSRPYFTELFLTR.

This Arabidopsis thaliana (Mouse-ear cress) protein is Putative F-box protein At2g19630.